A 496-amino-acid chain; its full sequence is Cytosol aminopeptidase (496 aa).

The Mn(2+) site is built by Lys258 and Asp263. Lys270 is an active-site residue. The Mn(2+) site is built by Asp281, Asp340, and Glu342. Arg344 is a catalytic residue.

Belongs to the peptidase M17 family. Requires Mn(2+) as cofactor.

The protein localises to the cytoplasm. It carries out the reaction Release of an N-terminal amino acid, Xaa-|-Yaa-, in which Xaa is preferably Leu, but may be other amino acids including Pro although not Arg or Lys, and Yaa may be Pro. Amino acid amides and methyl esters are also readily hydrolyzed, but rates on arylamides are exceedingly low.. The catalysed reaction is Release of an N-terminal amino acid, preferentially leucine, but not glutamic or aspartic acids.. Its function is as follows. Presumably involved in the processing and regular turnover of intracellular proteins. Catalyzes the removal of unsubstituted N-terminal amino acids from various peptides. This is Cytosol aminopeptidase (pepA) from Helicobacter pylori (strain ATCC 700392 / 26695) (Campylobacter pylori).